Consider the following 166-residue polypeptide: MASTSPEPSTAAAVAETGCSVQIRRLEATDHEKGFVALLSQLSACPDLTASEFAACFADLAALGDDHVILVAEDPAAPESRILATGCLFVERKFLRGGGKVGHVEDVVVDAAARGRGLGLRVVRRLVEIAKEAGCYKVILDCTPELRAYYAKCGFVEKGVQMAIYF.

The 146-residue stretch at 21–166 (VQIRRLEATD…EKGVQMAIYF (146 aa)) folds into the N-acetyltransferase domain. Substrate contacts are provided by residues S43, 93–96 (KFLR), and 105–107 (EDV). Residue 115 to 120 (GRGLGL) participates in acetyl-CoA binding. Residue 136–137 (YK) participates in substrate binding. 150–152 (YAK) is an acetyl-CoA binding site.

Belongs to the acetyltransferase family. GNA1 subfamily. In terms of assembly, homodimer.

The protein localises to the endoplasmic reticulum membrane. The catalysed reaction is D-glucosamine 6-phosphate + acetyl-CoA = N-acetyl-D-glucosamine 6-phosphate + CoA + H(+). The protein operates within nucleotide-sugar biosynthesis; UDP-N-acetyl-alpha-D-glucosamine biosynthesis; N-acetyl-alpha-D-glucosamine 1-phosphate from alpha-D-glucosamine 6-phosphate (route I): step 1/2. Its function is as follows. Acetyltransferase involved in UDP-N-acetylglucosamine (UDP-GlcNAc) biosynthesis. UDP-GlcNAc is an essential metabolite that serves as an initial sugar donor of N-glycan synthesis and thus plays an important role in protein and lipid glycosylation. The protein is Probable glucosamine 6-phosphate N-acetyltransferase 2 of Oryza sativa subsp. japonica (Rice).